The chain runs to 268 residues: uncharacterized protein (268 aa).

This is an uncharacterized protein from Haemophilus influenzae (strain ATCC 51907 / DSM 11121 / KW20 / Rd).